Here is a 370-residue protein sequence, read N- to C-terminus: StAR-related lipid transfer protein 7, mitochondrial (370 aa).

Residues 1-58 (MLPRRLLAAWLAGTRGGGLLALLANQCRFVTGLRVRRAQQIAQLYGRLYSESSRRVLL) constitute a mitochondrion transit peptide. Residues 86-111 (DEERIQEEELQRSINEMKRLEEMSNM) are a coiled coil. 2 disordered regions span residues 111 to 138 (MFQS…EGKE) and 343 to 370 (MSSE…IEYA). Residues 112–327 (FQSSGVQHHP…LHMATLKAKN (216 aa)) enclose the START domain.

In terms of processing, proteolytically cleaved by PARL. As to expression, expressed in nasal epithelial cells. Down-regulated in nasal epithelial cells in patients experiencing an asthma exacerbation as compared to stable asthmatics and healthy controls.

The protein resides in the mitochondrion. In terms of biological role, may play a protective role in mucosal tissues by preventing exaggerated allergic responses. This chain is StAR-related lipid transfer protein 7, mitochondrial (STARD7), found in Homo sapiens (Human).